We begin with the raw amino-acid sequence, 564 residues long: Septation ring formation regulator EzrA (564 aa).

At 1 to 4 the chain is on the extracellular side; sequence MVLY. Residues 5-23 form a helical membrane-spanning segment; the sequence is IILAIIVIILIAVGVLFYL. Topologically, residues 24–564 are cytoplasmic; the sequence is RSNKRQIIEK…KHIEEEVIKQ (541 aa). Coiled coils occupy residues 99–138, 190–223, 271–300, 350–435, and 471–550; these read SFNA…YKDN, DGNY…LIRE, LISR…LIEH, VRQF…RRLL, and VKQL…ESVE.

The protein belongs to the EzrA family.

It is found in the cell membrane. In terms of biological role, negative regulator of FtsZ ring formation; modulates the frequency and position of FtsZ ring formation. Inhibits FtsZ ring formation at polar sites. Interacts either with FtsZ or with one of its binding partners to promote depolymerization. The protein is Septation ring formation regulator EzrA of Staphylococcus aureus (strain NCTC 8325 / PS 47).